A 450-amino-acid chain; its full sequence is Sulfide:quinone oxidoreductase, mitochondrial (450 aa).

FAD-binding positions include 53 to 54, E75, Q83, and V118; that span reads SG. K173 bears the N6-acetyllysine mark. Catalysis depends on C201, which acts as the Cysteine persulfide intermediate. C201 and C379 form a disulfide bridge. D336 is a binding site for FAD. S343 carries the post-translational modification Phosphoserine. 344-347 contributes to the FAD binding site; it reads KTAA. Residue C379 is the Cysteine persulfide intermediate of the active site.

It belongs to the SQRD family. The cofactor is FAD.

The protein localises to the mitochondrion. The catalysed reaction is ubiquinone-10 + hydrogen sulfide + sulfite + 2 H(+) = ubiquinol-10 + thiosulfate. It catalyses the reaction a quinone + hydrogen sulfide + glutathione + H(+) = S-sulfanylglutathione + a quinol. It carries out the reaction ubiquinone-10 + hydrogen sulfide + glutathione + H(+) = S-sulfanylglutathione + ubiquinol-10. Functionally, catalyzes the oxidation of hydrogen sulfide with the help of a quinone, such as ubiquinone-10, giving rise to thiosulfate and ultimately to sulfane (molecular sulfur) atoms. Requires an additional electron acceptor; can use sulfite, sulfide or cyanide (in vitro). It is believed the in vivo electron acceptor is glutathione. The chain is Sulfide:quinone oxidoreductase, mitochondrial from Homo sapiens (Human).